Here is a 779-residue protein sequence, read N- to C-terminus: Conserved oligomeric Golgi complex subunit 6 (779 aa).

The protein belongs to the COG6 family.

It is found in the golgi apparatus membrane. Functionally, acts as a component of the peripheral membrane COG complex that is involved in intra-Golgi protein trafficking. COG is located at the cis-Golgi, and regulates tethering of retrograde intra-Golgi vesicles and possibly a number of other membrane trafficking events. The chain is Conserved oligomeric Golgi complex subunit 6 (COG6) from Kluyveromyces lactis (strain ATCC 8585 / CBS 2359 / DSM 70799 / NBRC 1267 / NRRL Y-1140 / WM37) (Yeast).